Consider the following 202-residue polypeptide: Glycerol-3-phosphate acyltransferase (202 aa).

5 helical membrane-spanning segments follow: residues 6–26 (LTLGMILSAYLAGSISSAVLV), 56–76 (SAALVLFFDMLKGALPAYIAF), 82–102 (SVSLGIIAIAACLGHIFPIFF), 118–138 (APIGPELALLLMGSWVLMVLI), and 141–161 (YSSLAAIVTALLAPFYTWYLD).

This sequence belongs to the PlsY family. As to quaternary structure, probably interacts with PlsX.

It localises to the cell inner membrane. It carries out the reaction an acyl phosphate + sn-glycerol 3-phosphate = a 1-acyl-sn-glycero-3-phosphate + phosphate. It participates in lipid metabolism; phospholipid metabolism. Its function is as follows. Catalyzes the transfer of an acyl group from acyl-phosphate (acyl-PO(4)) to glycerol-3-phosphate (G3P) to form lysophosphatidic acid (LPA). This enzyme utilizes acyl-phosphate as fatty acyl donor, but not acyl-CoA or acyl-ACP. In Shewanella woodyi (strain ATCC 51908 / MS32), this protein is Glycerol-3-phosphate acyltransferase.